Reading from the N-terminus, the 717-residue chain is Polyribonucleotide nucleotidyltransferase (717 aa).

Residues D487 and D493 each contribute to the Mg(2+) site. The 60-residue stretch at 554–613 folds into the KH domain; it reads PKIITMAINPDKIRDVIGPSGKQINKIIEETGVKIDIEQDGTVFISSINQEMNEKAKKII. The S1 motif domain maps to 623–691; that stretch reads GEIYLGKVKR…KQGRVNLSRK (69 aa).

Belongs to the polyribonucleotide nucleotidyltransferase family. It depends on Mg(2+) as a cofactor.

It is found in the cytoplasm. It carries out the reaction RNA(n+1) + phosphate = RNA(n) + a ribonucleoside 5'-diphosphate. Functionally, involved in mRNA degradation. Catalyzes the phosphorolysis of single-stranded polyribonucleotides processively in the 3'- to 5'-direction. This Bacillus mycoides (strain KBAB4) (Bacillus weihenstephanensis) protein is Polyribonucleotide nucleotidyltransferase.